We begin with the raw amino-acid sequence, 392 residues long: Gastricsin (392 aa).

Positions 1–16 (MKWMVVALLCLPLLEA) are cleaved as a signal peptide. Positions 17–62 (ALIRVPLKKMKSIRETMKEQGVLKDFLKNHKYDPGQKYHFGKFGDY) are cleaved as a propeptide — activation peptide. Positions 76 to 389 (YYGEISIGTP…DMGNNRVGLA (314 aa)) constitute a Peptidase A1 domain. Asp94 is an active-site residue. Intrachain disulfides connect Cys107/Cys112 and Cys270/Cys275. Asp280 is a catalytic residue. Cys314 and Cys347 are joined by a disulfide.

The protein belongs to the peptidase A1 family.

The protein localises to the secreted. It carries out the reaction More restricted specificity than pepsin A, but shows preferential cleavage at Tyr-|-Xaa bonds. High activity on hemoglobin.. Functionally, hydrolyzes a variety of proteins. The sequence is that of Gastricsin (Pgc) from Mus musculus (Mouse).